The sequence spans 101 residues: Urease subunit beta (101 aa).

This sequence belongs to the urease beta subunit family. Heterotrimer of UreA (gamma), UreB (beta) and UreC (alpha) subunits. Three heterotrimers associate to form the active enzyme.

The protein resides in the cytoplasm. It carries out the reaction urea + 2 H2O + H(+) = hydrogencarbonate + 2 NH4(+). Its pathway is nitrogen metabolism; urea degradation; CO(2) and NH(3) from urea (urease route): step 1/1. The polypeptide is Urease subunit beta (Saccharophagus degradans (strain 2-40 / ATCC 43961 / DSM 17024)).